We begin with the raw amino-acid sequence, 718 residues long: DNA ligase (718 aa).

NAD(+)-binding positions include 44 to 48, 93 to 94, and Glu127; these read DADYD and SL. Catalysis depends on Lys129, which acts as the N6-AMP-lysine intermediate. 4 residues coordinate NAD(+): Arg150, Glu186, Lys302, and Lys326. Zn(2+) contacts are provided by Cys432, Cys435, Cys456, and Cys462. Residues 640-718 form the BRCT domain; it reads TAGSPVAGKT…EDEWLALISG (79 aa).

Belongs to the NAD-dependent DNA ligase family. LigA subfamily. The cofactor is Mg(2+). Requires Mn(2+) as cofactor.

The enzyme catalyses NAD(+) + (deoxyribonucleotide)n-3'-hydroxyl + 5'-phospho-(deoxyribonucleotide)m = (deoxyribonucleotide)n+m + AMP + beta-nicotinamide D-nucleotide.. Functionally, DNA ligase that catalyzes the formation of phosphodiester linkages between 5'-phosphoryl and 3'-hydroxyl groups in double-stranded DNA using NAD as a coenzyme and as the energy source for the reaction. It is essential for DNA replication and repair of damaged DNA. This chain is DNA ligase, found in Rhizobium etli (strain ATCC 51251 / DSM 11541 / JCM 21823 / NBRC 15573 / CFN 42).